Reading from the N-terminus, the 268-residue chain is Small ribosomal subunit protein eS1 (268 aa).

The tract at residues 1–21 is disordered; it reads MAVGKNKGLSKGGKKGGKKKV.

It belongs to the eukaryotic ribosomal protein eS1 family. In terms of assembly, component of the small ribosomal subunit. Mature ribosomes consist of a small (40S) and a large (60S) subunit. The 40S subunit contains about 33 different proteins and 1 molecule of RNA (18S). The 60S subunit contains about 49 different proteins and 3 molecules of RNA (28S, 5.8S and 5S).

The protein resides in the cytoplasm. Essential for oogenesis; required for late follicle cell development. This Drosophila willistoni (Fruit fly) protein is Small ribosomal subunit protein eS1.